The sequence spans 309 residues: Ribonuclease Z (309 aa).

Residues histidine 63, histidine 65, aspartate 67, histidine 68, histidine 141, aspartate 212, and histidine 270 each coordinate Zn(2+). The active-site Proton acceptor is the aspartate 67.

This sequence belongs to the RNase Z family. In terms of assembly, homodimer. Zn(2+) serves as cofactor.

It catalyses the reaction Endonucleolytic cleavage of RNA, removing extra 3' nucleotides from tRNA precursor, generating 3' termini of tRNAs. A 3'-hydroxy group is left at the tRNA terminus and a 5'-phosphoryl group is left at the trailer molecule.. In terms of biological role, zinc phosphodiesterase, which displays some tRNA 3'-processing endonuclease activity. Probably involved in tRNA maturation, by removing a 3'-trailer from precursor tRNA. The sequence is that of Ribonuclease Z from Halalkalibacterium halodurans (strain ATCC BAA-125 / DSM 18197 / FERM 7344 / JCM 9153 / C-125) (Bacillus halodurans).